The primary structure comprises 1108 residues: DNA-directed RNA polymerase subunit beta (1108 aa).

The protein belongs to the RNA polymerase beta chain family. In plastids the minimal PEP RNA polymerase catalytic core is composed of four subunits: alpha, beta, beta', and beta''. When a (nuclear-encoded) sigma factor is associated with the core the holoenzyme is formed, which can initiate transcription.

The protein resides in the plastid. It is found in the chloroplast. It carries out the reaction RNA(n) + a ribonucleoside 5'-triphosphate = RNA(n+1) + diphosphate. Functionally, DNA-dependent RNA polymerase catalyzes the transcription of DNA into RNA using the four ribonucleoside triphosphates as substrates. This chain is DNA-directed RNA polymerase subunit beta, found in Gnetum parvifolium (Small-leaved jointfir).